We begin with the raw amino-acid sequence, 285 residues long: Acetyl-coenzyme A carboxylase carboxyl transferase subunit beta (285 aa).

The region spanning 29-285 (IMTKCPKCKK…ILKIHQEVTK (257 aa)) is the CoA carboxyltransferase N-terminal domain. Positions 33, 36, 52, and 55 each coordinate Zn(2+). The segment at 33-55 (CPKCKKIMYTKELAENLNVCFNC) adopts a C4-type zinc-finger fold.

It belongs to the AccD/PCCB family. Acetyl-CoA carboxylase is a heterohexamer composed of biotin carboxyl carrier protein (AccB), biotin carboxylase (AccC) and two subunits each of ACCase subunit alpha (AccA) and ACCase subunit beta (AccD). Zn(2+) serves as cofactor.

It is found in the cytoplasm. The catalysed reaction is N(6)-carboxybiotinyl-L-lysyl-[protein] + acetyl-CoA = N(6)-biotinyl-L-lysyl-[protein] + malonyl-CoA. It participates in lipid metabolism; malonyl-CoA biosynthesis; malonyl-CoA from acetyl-CoA: step 1/1. Its function is as follows. Component of the acetyl coenzyme A carboxylase (ACC) complex. Biotin carboxylase (BC) catalyzes the carboxylation of biotin on its carrier protein (BCCP) and then the CO(2) group is transferred by the transcarboxylase to acetyl-CoA to form malonyl-CoA. The polypeptide is Acetyl-coenzyme A carboxylase carboxyl transferase subunit beta (Staphylococcus aureus (strain MSSA476)).